Reading from the N-terminus, the 706-residue chain is Sodium- and chloride-dependent glycine transporter 1 (706 aa).

The tract at residues 1 to 26 (MSGGDTRAAIARPRMAAAHGPVAPSS) is disordered. At 1-108 (MSGGDTRAAI…KRGNWGNQIE (108 aa)) the chain is on the cytoplasmic side. The span at 7–18 (RAAIARPRMAAA) shows a compositional bias: low complexity. Helical transmembrane passes span 109–129 (FVLT…FPYL), 136–156 (GAFM…LFFM), and 188–208 (VSTY…YYFF). Over 209–285 (SSMTHVLPWA…LSDDIGNFGE (77 aa)) the chain is Extracellular. The next 9 helical transmembrane spans lie at 286 to 306 (VRLP…LCLI), 315 to 335 (VVYF…VRGV), 360 to 380 (VWGD…GGLI), 407 to 427 (SVYA…HLGV), 450 to 470 (LLPI…LLGL), 506 to 526 (VAGF…WLLL), 530 to 550 (YAAS…IMYI), 570 to 590 (LFFQ…ILVF), and 610 to 630 (VAIG…YAMF). Over 631–706 (RLCRTDGDTL…GSSRLQDSRI (76 aa)) the chain is Cytoplasmic. Phosphoserine is present on residues serine 673 and serine 698. Positions 695-706 (SNGSSRLQDSRI) are essential for interaction with EXOC1.

It belongs to the sodium:neurotransmitter symporter (SNF) (TC 2.A.22) family. SLC6A9 subfamily. As to quaternary structure, interacts with EXOC1; interaction increases the transporter capacity of SLC6A9 probably by promoting its insertion into the cell membrane. Interacts with EXOC3 and EXOC4. Expressed in the brain, kidney, pancreas, lung, placenta and liver. In terms of tissue distribution, expressed only in the brain.

It is found in the cell membrane. It catalyses the reaction glycine(out) + chloride(out) + 2 Na(+)(out) = glycine(in) + chloride(in) + 2 Na(+)(in). Its activity is regulated as follows. Inhibited by sarcosine. Functionally, sodium- and chloride-dependent glycine transporter. Essential for regulating glycine concentrations at inhibitory glycinergic synapses. Sodium- and chloride-dependent glycine transporter. The protein is Sodium- and chloride-dependent glycine transporter 1 (SLC6A9) of Homo sapiens (Human).